The primary structure comprises 73 residues: Conotoxin Cl9.2 (73 aa).

Positions 1–18 (MSKLVILAVLVLLPLVTA) are cleaved as a signal peptide. Residues 19–41 (EHGRDEQAMQPEKKTMWTLWSLT) constitute a propeptide that is removed on maturation. 3 cysteine pairs are disulfide-bonded: C46-C61, C52-C63, and C58-C72.

In terms of tissue distribution, expressed by the venom duct.

Its subcellular location is the secreted. The chain is Conotoxin Cl9.2 from Californiconus californicus (California cone).